Here is a 90-residue protein sequence, read N- to C-terminus: Probable Fe(2+)-trafficking protein (90 aa).

It belongs to the Fe(2+)-trafficking protein family.

In terms of biological role, could be a mediator in iron transactions between iron acquisition and iron-requiring processes, such as synthesis and/or repair of Fe-S clusters in biosynthetic enzymes. This Stutzerimonas stutzeri (strain A1501) (Pseudomonas stutzeri) protein is Probable Fe(2+)-trafficking protein.